Here is a 458-residue protein sequence, read N- to C-terminus: MQKLSIPKGTRDFTPCEMDKRNYIFDTIRSVFYLYGFKQIETPALENLSTLLGKYGEENDKLLFKILNSGDFISKVNPIDWNNHQLSKLTKQISKKGLRYDLTLPLARFVVMHRNEITFPFKRFQIQPVWRSDRPQKGRYREFVQCDADIVGSDSLLNEVELIQIIDEVFHRLSISISIKINNRKILNGIAEIISEEKKITDITTAMDKLDKVGLTKVNEELLQKGISIQAIDQLQPFFLLKGSNQNKISTLKNILSTSPIGIKGLQEIETIFNKLNLIPTRNTIKFDLTLARGLNYYTGTIFEVKCLNVPIGSVLGGGRYDNLTNIFGLSNLSGVGISFGADRIFDILNQLNLYPNTNASHTQILFVNLGEKGVDFILPVLFSLRKVGINAELYPHNTKIKKQLSYAHNNQIPFVAIVGSTEIAENKITIKDMRSCSQFSIALDKLINFFQYERQSV.

The protein belongs to the class-II aminoacyl-tRNA synthetase family. As to quaternary structure, homodimer.

The protein localises to the cytoplasm. The catalysed reaction is tRNA(His) + L-histidine + ATP = L-histidyl-tRNA(His) + AMP + diphosphate + H(+). The protein is Histidine--tRNA ligase of Azobacteroides pseudotrichonymphae genomovar. CFP2.